The sequence spans 355 residues: Uroporphyrinogen decarboxylase (355 aa).

Residues 36-40 (RQAGR), D85, Y160, S215, and H334 contribute to the substrate site.

Belongs to the uroporphyrinogen decarboxylase family. Homodimer.

The protein localises to the cytoplasm. The catalysed reaction is uroporphyrinogen III + 4 H(+) = coproporphyrinogen III + 4 CO2. It functions in the pathway porphyrin-containing compound metabolism; protoporphyrin-IX biosynthesis; coproporphyrinogen-III from 5-aminolevulinate: step 4/4. Functionally, catalyzes the decarboxylation of four acetate groups of uroporphyrinogen-III to yield coproporphyrinogen-III. This Rhodococcus erythropolis (strain PR4 / NBRC 100887) protein is Uroporphyrinogen decarboxylase.